Reading from the N-terminus, the 341-residue chain is MAEFWTSYLWPLLVVIGQSLLLLILLLITIAYILLADRKIWAAVQIRRGPNVVGPWGLLQSFADLLKFVFKEPMIPSGANKGVFLLAPLVSCVLALAAWAVIPVNAGWVIADINVGVLYILAVSSLSVYGIIMAGWSSNSKYPFLAALRSAAQMVSYEVSIGFVIIAVLLCVGSLNLTAIVEAQNTKWGLLGWYWLPLFPVFVIFYVSALAETNRPPFDLVEAESELVAGFMVEYASTPYLLFMLGEYVAITTMCAMGAILFLGGWLPPVPYAPFTWVPGIIWFMLKGFFMFFLFAMAKAIVPRYRYDQLMRLGWKVFLPLSLVMVVIVAGVLQFAGLAPQ.

A run of 8 helical transmembrane segments spans residues 13-33, 82-102, 115-135, 161-181, 190-210, 248-268, 277-297, and 317-337; these read LVVI…IAYI, GVFL…WAVI, VGVL…IMAG, IGFV…TAIV, LLGW…VSAL, YVAI…GWLP, WVPG…LFAM, and VFLP…QFAG.

This sequence belongs to the complex I subunit 1 family. As to quaternary structure, NDH-1 is composed of 14 different subunits. Subunits NuoA, H, J, K, L, M, N constitute the membrane sector of the complex.

The protein localises to the cell inner membrane. It carries out the reaction a quinone + NADH + 5 H(+)(in) = a quinol + NAD(+) + 4 H(+)(out). NDH-1 shuttles electrons from NADH, via FMN and iron-sulfur (Fe-S) centers, to quinones in the respiratory chain. The immediate electron acceptor for the enzyme in this species is believed to be ubiquinone. Couples the redox reaction to proton translocation (for every two electrons transferred, four hydrogen ions are translocated across the cytoplasmic membrane), and thus conserves the redox energy in a proton gradient. This subunit may bind ubiquinone. The polypeptide is NADH-quinone oxidoreductase subunit H 1 (Rhodopseudomonas palustris (strain BisB18)).